Consider the following 266-residue polypeptide: Putative carbamate hydrolase RutD (266 aa).

The 225-residue stretch at 14 to 238 (PVVVLSAGLG…RVEMPWGGHA (225 aa)) folds into the AB hydrolase-1 domain.

The protein belongs to the AB hydrolase superfamily. Hydrolase RutD family.

It carries out the reaction carbamate + 2 H(+) = NH4(+) + CO2. In terms of biological role, involved in pyrimidine catabolism. May facilitate the hydrolysis of carbamate, a reaction that can also occur spontaneously. The polypeptide is Putative carbamate hydrolase RutD (Klebsiella pneumoniae (strain 342)).